Consider the following 77-residue polypeptide: Putative membrane protein insertion efficiency factor (77 aa).

This sequence belongs to the UPF0161 family.

The protein resides in the cell membrane. In terms of biological role, could be involved in insertion of integral membrane proteins into the membrane. In Geobacillus sp. (strain WCH70), this protein is Putative membrane protein insertion efficiency factor.